The chain runs to 469 residues: Argininosuccinate lyase (469 aa).

The protein belongs to the lyase 1 family. Argininosuccinate lyase subfamily.

It localises to the cytoplasm. The catalysed reaction is 2-(N(omega)-L-arginino)succinate = fumarate + L-arginine. The protein operates within amino-acid biosynthesis; L-arginine biosynthesis; L-arginine from L-ornithine and carbamoyl phosphate: step 3/3. In Burkholderia multivorans (strain ATCC 17616 / 249), this protein is Argininosuccinate lyase.